A 73-amino-acid polypeptide reads, in one-letter code: Large ribosomal subunit protein bL31 (73 aa).

This sequence belongs to the bacterial ribosomal protein bL31 family. Type A subfamily. As to quaternary structure, part of the 50S ribosomal subunit.

Its function is as follows. Binds the 23S rRNA. The sequence is that of Large ribosomal subunit protein bL31 (rpmE) from Ruegeria pomeroyi (strain ATCC 700808 / DSM 15171 / DSS-3) (Silicibacter pomeroyi).